We begin with the raw amino-acid sequence, 181 residues long: Ribosome maturation factor RimM (181 aa).

A PRC barrel domain is found at 100–177 (EEGFYWMQLI…QIQVDWQLED (78 aa)).

It belongs to the RimM family. Binds ribosomal protein uS19.

The protein localises to the cytoplasm. In terms of biological role, an accessory protein needed during the final step in the assembly of 30S ribosomal subunit, possibly for assembly of the head region. Essential for efficient processing of 16S rRNA. May be needed both before and after RbfA during the maturation of 16S rRNA. It has affinity for free ribosomal 30S subunits but not for 70S ribosomes. In Hydrogenovibrio crunogenus (strain DSM 25203 / XCL-2) (Thiomicrospira crunogena), this protein is Ribosome maturation factor RimM.